The sequence spans 180 residues: Large ribosomal subunit protein uL6 (180 aa).

The protein belongs to the universal ribosomal protein uL6 family. As to quaternary structure, part of the 50S ribosomal subunit.

Its function is as follows. This protein binds to the 23S rRNA, and is important in its secondary structure. It is located near the subunit interface in the base of the L7/L12 stalk, and near the tRNA binding site of the peptidyltransferase center. The polypeptide is Large ribosomal subunit protein uL6 (Thermus aquaticus).